The sequence spans 269 residues: GATA zinc finger domain-containing protein 1 (269 aa).

Residues Cys9 to Cys33 form a GATA-type zinc finger. The segment at Ala63–Lys115 is disordered. A Glycyl lysine isopeptide (Lys-Gly) (interchain with G-Cter in SUMO2) cross-link involves residue Lys262.

Component of a chromatin complex, at least composed of KDM5A, GATAD1 and EMSY. Ubiquitously expressed among various tissue types. Expressed in left ventricular myocytes.

Its subcellular location is the nucleus. Functionally, component of some chromatin complex recruited to chromatin sites methylated 'Lys-4' of histone H3 (H3K4me), with a preference for trimethylated form (H3K4me3). The chain is GATA zinc finger domain-containing protein 1 (GATAD1) from Homo sapiens (Human).